The sequence spans 682 residues: TPR repeat-containing thioredoxin TTL4 (682 aa).

Disordered stretches follow at residues 1-120 (MSHY…GTPL) and 132-157 (NNNN…TGNI). Ser8 carries the phosphoserine modification. Residues 16 to 39 (KFRDSLSFQRDDDVINKPDFRELD) are compositionally biased toward basic and acidic residues. Phosphoserine is present on Ser42. Low complexity predominate over residues 48–71 (GSSSAAATPAASGSSSSSSGSASG). 7 TPR repeats span residues 211–244 (SEEV…SPEN), 246–278 (AYRS…DPSY), 280–312 (RAHQ…PDQA), 402–435 (AYVL…DHSN), 449–482 (VAKA…DAFN), 483–516 (SVLY…QPSY), and 518–550 (KALL…LPGD). The Thioredoxin domain maps to 587–674 (DKFKTATSLP…MVCPSHQLLE (88 aa)).

In terms of tissue distribution, widely expressed.

Involved in osmotic and salt stress tolerance. May play a role in the control of meristematic cell size during osmotic stress. The protein is TPR repeat-containing thioredoxin TTL4 (TTL4) of Arabidopsis thaliana (Mouse-ear cress).